We begin with the raw amino-acid sequence, 217 residues long: Adenylate kinase (217 aa).

Residue 10–15 (GAGKGT) participates in ATP binding. Positions 30–59 (STGDMFRAAMKNETELGLKAKSFIDAGDLV) are NMP. AMP is bound by residues Thr-31, Arg-36, 57–59 (DLV), 85–88 (GFPR), and Gln-92. Positions 126 to 163 (GRRVSPTTGKTYHIVYNPPKVEGKCDIDGSDLIQRDDD) are LID. Residues Arg-127 and 136-137 (TY) contribute to the ATP site. 2 residues coordinate AMP: Arg-160 and Arg-171. Gln-199 is an ATP binding site.

The protein belongs to the adenylate kinase family. As to quaternary structure, monomer.

Its subcellular location is the cytoplasm. It catalyses the reaction AMP + ATP = 2 ADP. Its pathway is purine metabolism; AMP biosynthesis via salvage pathway; AMP from ADP: step 1/1. Functionally, catalyzes the reversible transfer of the terminal phosphate group between ATP and AMP. Plays an important role in cellular energy homeostasis and in adenine nucleotide metabolism. This is Adenylate kinase from Shouchella clausii (strain KSM-K16) (Alkalihalobacillus clausii).